The primary structure comprises 314 residues: MCPTLNNIVSSLQRNGIFINSLIAALTIGGQQLFSSSTFSCPCQVGKNFYYGSAFLVIPALILLVAGFALRSQMWTITGEYCCSCAPPYRRISPLECKLACLRFFSITGRAVIAPLTWLAVTLLTGTYYECAASEFASVDHYPMFDNVSASKREEILAGFPCCRSAPSDVILVRDEIALLHRYQSQMLGWILITLATIAALVSCCVAKCCSPLTSLQHCYWTSHLQNERELFEQAAEQHSRLLMMHRIKKLFGFIPGSEDVKHIRIPSCQDWKDISVPTLLCMGDDLQGHYSFLGNRVDEDNEEDRSRGIELKP.

At 1 to 14 the chain is on the cytoplasmic side; the sequence is MCPTLNNIVSSLQR. A helical membrane pass occupies residues 15-37; sequence NGIFINSLIAALTIGGQQLFSSS. Topologically, residues 38–48 are extracellular; the sequence is TFSCPCQVGKN. Intrachain disulfides connect Cys41-Cys131 and Cys43-Cys162. A helical membrane pass occupies residues 49-71; the sequence is FYYGSAFLVIPALILLVAGFALR. Topologically, residues 72–103 are cytoplasmic; the sequence is SQMWTITGEYCCSCAPPYRRISPLECKLACLR. Residues 104–129 form a helical membrane-spanning segment; sequence FFSITGRAVIAPLTWLAVTLLTGTYY. The Extracellular segment spans residues 130 to 183; that stretch reads ECAASEFASVDHYPMFDNVSASKREEILAGFPCCRSAPSDVILVRDEIALLHRY. The chain crosses the membrane as a helical span at residues 184 to 207; the sequence is QSQMLGWILITLATIAALVSCCVA. The Cytoplasmic portion of the chain corresponds to 208–314; it reads KCCSPLTSLQ…DRSRGIELKP (107 aa).

It belongs to the CALHM family. Oligomerizes to form decameric and undecameric channels. Two hemichannels can assemble in a tail-to-tail manner to form a gap junction. In terms of tissue distribution, placenta.

Its subcellular location is the cell membrane. May assemble to form gap junction channel-like structures involved in intercellular communication. Channel gating and ion conductance are likely regulated by membrane lipids rather than by membrane depolarization or extracellular calcium levels. The sequence is that of Calcium homeostasis modulator protein 4 from Homo sapiens (Human).